The following is a 115-amino-acid chain: uncharacterized protein (115 aa).

This is an uncharacterized protein from Saccharomyces cerevisiae (strain ATCC 204508 / S288c) (Baker's yeast).